Consider the following 256-residue polypeptide: Homeobox-leucine zipper protein HOX18 (256 aa).

The tract at residues 52–117 is disordered; the sequence is YDHGRDEEQA…GGGGGTRKKL (66 aa). Positions 102–112 are enriched in gly residues; that stretch reads DGGSGSGGGGG. Positions 112 to 171 form a DNA-binding region, homeobox; the sequence is GTRKKLQLTKEQSTLLEDSFRVHNILSHAQKHELARQLKLKPRQVEVWFQNRRARTKLKQ. Residues 170 to 214 are leucine-zipper; sequence KQTEVDCEFLKRCCESLTEENKQLKHELMELRRLASAAAAAAGSQ.

The protein belongs to the HD-ZIP homeobox family. Class II subfamily. In terms of tissue distribution, expressed in roots, leaf sheaths and blades and panicles.

The protein localises to the nucleus. Functionally, probable transcription factor. This Oryza sativa subsp. indica (Rice) protein is Homeobox-leucine zipper protein HOX18 (HOX18).